The chain runs to 211 residues: MDLLRTEFDIQHHLVLSRKDTLHHALIRMIVSTLSTPEELTNLRKKDFRFNKGKNLDYYTVKLSEGGRSRISPVDKRTFEIIQTMPSQPFRMSEEEMNEIVRSYSPPGRIYTCKKLREAVESILSDSDLFGVKLRNDEERYAFMLDFNPLYSGLWDLEDEEGVEDFILSYSEVTGSRDWRKISDETGIEAEIVKKVIESGKKSILRFRADF.

This is an uncharacterized protein from Archaeoglobus fulgidus (strain ATCC 49558 / DSM 4304 / JCM 9628 / NBRC 100126 / VC-16).